The chain runs to 272 residues: S-adenosylmethionine decarboxylase proenzyme (272 aa).

Serine 122 acts as the Schiff-base intermediate with substrate; via pyruvic acid in catalysis. Position 122 is a pyruvic acid (Ser); by autocatalysis (serine 122). The Proton acceptor; for processing activity role is filled by histidine 127. Cysteine 150 serves as the catalytic Proton donor; for catalytic activity.

The protein belongs to the prokaryotic AdoMetDC family. Type 2 subfamily. As to quaternary structure, heterooctamer of four alpha and four beta chains arranged as a tetramer of alpha/beta heterodimers. Requires pyruvate as cofactor. Is synthesized initially as an inactive proenzyme. Formation of the active enzyme involves a self-maturation process in which the active site pyruvoyl group is generated from an internal serine residue via an autocatalytic post-translational modification. Two non-identical subunits are generated from the proenzyme in this reaction, and the pyruvate is formed at the N-terminus of the alpha chain, which is derived from the carboxyl end of the proenzyme. The post-translation cleavage follows an unusual pathway, termed non-hydrolytic serinolysis, in which the side chain hydroxyl group of the serine supplies its oxygen atom to form the C-terminus of the beta chain, while the remainder of the serine residue undergoes an oxidative deamination to produce ammonia and the pyruvoyl group blocking the N-terminus of the alpha chain.

It carries out the reaction S-adenosyl-L-methionine + H(+) = S-adenosyl 3-(methylsulfanyl)propylamine + CO2. The protein operates within amine and polyamine biosynthesis; S-adenosylmethioninamine biosynthesis; S-adenosylmethioninamine from S-adenosyl-L-methionine: step 1/1. Its function is as follows. Catalyzes the decarboxylation of S-adenosylmethionine to S-adenosylmethioninamine (dcAdoMet), the propylamine donor required for the synthesis of the polyamines spermine and spermidine from the diamine putrescine. This is S-adenosylmethionine decarboxylase proenzyme from Clostridium botulinum (strain Eklund 17B / Type B).